Here is a 556-residue protein sequence, read N- to C-terminus: Glutamine--tRNA ligase (556 aa).

The short motif at P34–H44 is the 'HIGH' region element. ATP contacts are provided by residues E35–N37 and H41–S47. L-glutamine-binding residues include D67 and Y212. Residues T231, R261 to L262, and M269 to K271 each bind ATP. The 'KMSKS' region signature appears at I268–R272.

Belongs to the class-I aminoacyl-tRNA synthetase family. Monomer.

The protein localises to the cytoplasm. The catalysed reaction is tRNA(Gln) + L-glutamine + ATP = L-glutaminyl-tRNA(Gln) + AMP + diphosphate. This is Glutamine--tRNA ligase from Sodalis glossinidius (strain morsitans).